We begin with the raw amino-acid sequence, 582 residues long: ATP-dependent lipid A-core flippase (582 aa).

5 helical membrane-spanning segments follow: residues 16–36 (LWPT…ALIL), 64–84 (LLWM…TSYI), 153–173 (IIGL…ILVV), 253–273 (PIIQ…ASFP), and 275–295 (VMDS…IALM). Residues 28–310 (IVAGIALILN…LTNVNAQFQR (283 aa)) form the ABC transmembrane type-1 domain. The 237-residue stretch at 342–578 (LEFRNVTFTY…HGVYAQLHKM (237 aa)) folds into the ABC transporter domain. 376 to 383 (GRSGSGKS) contributes to the ATP binding site.

Belongs to the ABC transporter superfamily. Lipid exporter (TC 3.A.1.106) family. In terms of assembly, homodimer.

It localises to the cell inner membrane. The catalysed reaction is ATP + H2O + lipid A-core oligosaccharideSide 1 = ADP + phosphate + lipid A-core oligosaccharideSide 2.. Its function is as follows. Involved in lipopolysaccharide (LPS) biosynthesis. Translocates lipid A-core from the inner to the outer leaflet of the inner membrane. Transmembrane domains (TMD) form a pore in the inner membrane and the ATP-binding domain (NBD) is responsible for energy generation. The polypeptide is ATP-dependent lipid A-core flippase (Salmonella choleraesuis (strain SC-B67)).